The following is a 164-amino-acid chain: Transcriptional repressor NrdR (164 aa).

Residues 3–34 fold into a zinc finger; that stretch reads CPKCNYNKSSVVDSRQAEDGNTIRRRRECEKC. The region spanning 49–139 is the ATP-cone domain; sequence LLVVKKDGTR…VYKSFKDVDE (91 aa).

Belongs to the NrdR family. Zn(2+) serves as cofactor.

Its function is as follows. Negatively regulates transcription of bacterial ribonucleotide reductase nrd genes and operons by binding to NrdR-boxes. This is Transcriptional repressor NrdR from Streptococcus uberis (strain ATCC BAA-854 / 0140J).